The chain runs to 445 residues: MREIVHLQAGQCGNQIGAKFWEVISDEHGIDPTGTYHGDSDLQLERINVYYNEATGGKYVPRAVLVDLEPGTMDSVRSGPFGQIFRPDNFVFGQSGAGNNWAKGHYTEGAELVDSVLDVVRKEAESCDCLQGFQLTHSLGGGTGSGMGTLLISKIREEYPDRIMNTFSVVPSPKVSDTVVEPYNATLSVHQLVENTDETYCIDNEALYDICFRTLKLTTPTYGDLNHLVSATMSGVTTCLRFPGQLNADLRKLAVNMVPFPRLHFFMPGFAPLTSRGSQQYRALTVPELTQQMFDAKNMMAACDPRHGRYLTVAAVFRGRMSMKEVDEQMLNVQNKNSSYFVEWIPNNVKTAVCDIPPRGLKMSATFIGNSTAIQELFKRISEQFTAMFRRKAFLHWYTGEGMDEMEFTEAESNMNDLVSEYQQYQDATAEEEGEFEEEAEEEVA.

An MREI motif motif is present at residues 1-4; the sequence is MREI. Gln-11 provides a ligand contact to GTP. A Phosphothreonine modification is found at Thr-55. Lys-58 is subject to N6-acetyllysine. 5 residues coordinate GTP: Glu-69, Ser-138, Gly-142, Thr-143, and Gly-144. Glu-69 contributes to the Mg(2+) binding site. A Phosphoserine; by CDK1 modification is found at Ser-172. Residues Asn-204 and Asn-226 each contribute to the GTP site. The interval 426 to 445 is disordered; sequence QDATAEEEGEFEEEAEEEVA. Residues 429–445 are compositionally biased toward acidic residues; it reads TAEEEGEFEEEAEEEVA. Glu-438 is subject to 5-glutamyl polyglutamate.

This sequence belongs to the tubulin family. As to quaternary structure, dimer of alpha and beta chains. A typical microtubule is a hollow water-filled tube with an outer diameter of 25 nm and an inner diameter of 15 nM. Alpha-beta heterodimers associate head-to-tail to form protofilaments running lengthwise along the microtubule wall with the beta-tubulin subunit facing the microtubule plus end conferring a structural polarity. Microtubules usually have 13 protofilaments but different protofilament numbers can be found in some organisms and specialized cells. Component of sperm flagellar doublet microtubules. Requires Mg(2+) as cofactor. Post-translationally, some glutamate residues at the C-terminus are polyglycylated, resulting in polyglycine chains on the gamma-carboxyl group. Glycylation is mainly limited to tubulin incorporated into axonemes (cilia and flagella) whereas glutamylation is prevalent in neuronal cells, centrioles, axonemes, and the mitotic spindle. Both modifications can coexist on the same protein on adjacent residues, and lowering polyglycylation levels increases polyglutamylation, and reciprocally. Cilia and flagella glycylation is required for their stability and maintenance. Flagella glycylation controls sperm motility. Some glutamate residues at the C-terminus are polyglutamylated, resulting in polyglutamate chains on the gamma-carboxyl group. Polyglutamylation plays a key role in microtubule severing by spastin (SPAST). SPAST preferentially recognizes and acts on microtubules decorated with short polyglutamate tails: severing activity by SPAST increases as the number of glutamates per tubulin rises from one to eight, but decreases beyond this glutamylation threshold. Glutamylation is also involved in cilia motility. In terms of processing, phosphorylated on Ser-172 by CDK1 during the cell cycle, from metaphase to telophase, but not in interphase. This phosphorylation inhibits tubulin incorporation into microtubules.

It is found in the cytoplasm. It localises to the cytoskeleton. Its subcellular location is the flagellum axoneme. Its function is as follows. Tubulin is the major constituent of microtubules, a cylinder consisting of laterally associated linear protofilaments composed of alpha- and beta-tubulin heterodimers. Microtubules grow by the addition of GTP-tubulin dimers to the microtubule end, where a stabilizing cap forms. Below the cap, tubulin dimers are in GDP-bound state, owing to GTPase activity of alpha-tubulin. This is Tubulin beta-4B chain (TUBB4B) from Bos taurus (Bovine).